A 263-amino-acid polypeptide reads, in one-letter code: MADWLIGIIMGAVEGLTEFLPVSSTGHMILTGHLIGFDDDRAKVFEVVIQLGSILAVVVIFWKRLWSLVGIGKVTDGPSLNLLHIIIGMIPAGVLGVLFHSAIKEVLFGPGPVVISLVAGGILMIVAEKFSKPSTARTLDEITYKQAFTIGMFQCLALWPGFSRSGSTISGGLLARVSHTAAAEYTFILAVPMMVAASGLDLIKSWDILSTADIPLFATGFITAFVVAMLAIVSFLKLLSRVKLTPFAYYRFILAAVFYFFIM.

The next 8 membrane-spanning stretches (helical) occupy residues 17 to 37 (TEFL…LIGF), 42 to 62 (AKVF…VIFW), 83 to 103 (LHII…HSAI), 106 to 126 (VLFG…LMIV), 142 to 162 (ITYK…WPGF), 183 to 203 (AEYT…LDLI), 216 to 236 (LFAT…VSFL), and 242 to 262 (VKLT…YFFI).

Belongs to the UppP family.

The protein localises to the cell membrane. It carries out the reaction di-trans,octa-cis-undecaprenyl diphosphate + H2O = di-trans,octa-cis-undecaprenyl phosphate + phosphate + H(+). Its function is as follows. Catalyzes the dephosphorylation of undecaprenyl diphosphate (UPP). Confers resistance to bacitracin. The chain is Undecaprenyl-diphosphatase 2 from Bacillus anthracis.